A 287-amino-acid chain; its full sequence is MAVALRFTKMQGIGNDYVYINGFQERIDSPGELARKISDRHFGIGSDGLVLILPSATADVRMRMFNADGSESEMCGNAVRCVGKYVYDHGIQVKDVITVETRAGVKIVRLLFEAGKVCGATVDMGEPELHPARIPVLTETSGDGSQQRFVARPVDVNGQLYEITAVSMGNPHAVIFMKGIDDLDLPRIGPRFEHHPLFPKRTNTEFAEVISSTKVRMRVWERGAGETLACGTGACAVAVACVLNGYAGRDVEVELKGGSLHIHWDEASNHVYMTGGAVTVFSGEYYI.

Substrate-binding residues include N15 and N66. C75 (proton donor) is an active-site residue. Residues G76 to N77, N170, N203, and E221 to R222 contribute to the substrate site. The Proton acceptor role is filled by C230. G231–T232 serves as a coordination point for substrate.

Belongs to the diaminopimelate epimerase family. Homodimer.

It localises to the cytoplasm. The enzyme catalyses (2S,6S)-2,6-diaminopimelate = meso-2,6-diaminopimelate. Its pathway is amino-acid biosynthesis; L-lysine biosynthesis via DAP pathway; DL-2,6-diaminopimelate from LL-2,6-diaminopimelate: step 1/1. Catalyzes the stereoinversion of LL-2,6-diaminopimelate (L,L-DAP) to meso-diaminopimelate (meso-DAP), a precursor of L-lysine and an essential component of the bacterial peptidoglycan. The protein is Diaminopimelate epimerase of Desulfovibrio desulfuricans (strain ATCC 27774 / DSM 6949 / MB).